A 323-amino-acid chain; its full sequence is Acetylglutamate kinase (323 aa).

Residues 90-91, arginine 112, and asparagine 218 each bind substrate; that span reads GG.

This sequence belongs to the acetylglutamate kinase family. ArgB subfamily.

The protein localises to the cytoplasm. It carries out the reaction N-acetyl-L-glutamate + ATP = N-acetyl-L-glutamyl 5-phosphate + ADP. The protein operates within amino-acid biosynthesis; L-arginine biosynthesis; N(2)-acetyl-L-ornithine from L-glutamate: step 2/4. Its function is as follows. Catalyzes the ATP-dependent phosphorylation of N-acetyl-L-glutamate. The chain is Acetylglutamate kinase from Ehrlichia canis (strain Jake).